The sequence spans 425 residues: Histidine--tRNA ligase 1 (425 aa).

This sequence belongs to the class-II aminoacyl-tRNA synthetase family. As to quaternary structure, homodimer.

Its subcellular location is the cytoplasm. It carries out the reaction tRNA(His) + L-histidine + ATP = L-histidyl-tRNA(His) + AMP + diphosphate + H(+). In Bacillus cereus (strain ZK / E33L), this protein is Histidine--tRNA ligase 1.